The following is a 752-amino-acid chain: Phosphatidylinositol 4-phosphate 5-kinase 1 (752 aa).

MORN repeat units lie at residues 81–103 (YIGS…DGCM), 104–126 (YEGD…SGAT), 127–149 (YEGE…DGDT), 150–172 (YRGT…NGDF), 173–195 (YEGT…NGNQ), 196–218 (YTGE…NGNR), and 219–241 (YEGL…DGSS). The PIPK domain maps to 349–748 (SKGHKKYDLM…RFRDFISRIF (400 aa)). Positions 708–729 (YDITKKIEHAYKSLQADPASIS) are activation loop.

In terms of processing, phosphorylation inactivates the enzyme. As to expression, expressed in the whole plant, preferentially in roots. Strongly expressed in meristematic tissues, namely procambial cell layers.

It catalyses the reaction a 1,2-diacyl-sn-glycero-3-phospho-(1D-myo-inositol 4-phosphate) + ATP = a 1,2-diacyl-sn-glycero-3-phospho-(1D-myo-inositol-4,5-bisphosphate) + ADP + H(+). Functionally, catalyzes the synthesis of phosphatidylinositol 4,5-bisphosphate and phosphatidylinositol 3,4-bisphosphate. The polypeptide is Phosphatidylinositol 4-phosphate 5-kinase 1 (PIP5K1) (Arabidopsis thaliana (Mouse-ear cress)).